The following is a 291-amino-acid chain: Pituitary-specific positive transcription factor 1 (291 aa).

The 9aaTAD motif lies at 5–13 (PFTSADTFI). A POU-specific domain is found at 124 to 198 (MDSPEIRELE…ILSKWLEEAE (75 aa)). A DNA-binding region (homeobox) is located at residues 214–273 (KRKRRTTISIAAKDALERHFGEQNKPSSQEILRMAEELNLEKEVVRVWFCNRRQREKRVK).

It belongs to the POU transcription factor family. Class-1 subfamily. In terms of assembly, interacts with PITX1. Interacts with LHX3. Interacts with ELK1.

It is found in the nucleus. Functionally, transcription factor involved in the specification of the lactotrope, somatotrope, and thyrotrope phenotypes in the developing anterior pituitary. Activates growth hormone and prolactin genes. Specifically binds to the consensus sequence 5'-TAAAT-3'. This is Pituitary-specific positive transcription factor 1 (POU1F1) from Sus scrofa (Pig).